The sequence spans 278 residues: Phosphate import ATP-binding protein PstB (278 aa).

The 242-residue stretch at 32–273 (YETRDLNLWY…PSDKRTEDYI (242 aa)) folds into the ABC transporter domain. 64 to 71 (GPSGCGKS) provides a ligand contact to ATP.

This sequence belongs to the ABC transporter superfamily. Phosphate importer (TC 3.A.1.7) family. The complex is composed of two ATP-binding proteins (PstB), two transmembrane proteins (PstC and PstA) and a solute-binding protein (PstS).

Its subcellular location is the cell membrane. The catalysed reaction is phosphate(out) + ATP + H2O = ADP + 2 phosphate(in) + H(+). Functionally, part of the ABC transporter complex PstSACB involved in phosphate import. Responsible for energy coupling to the transport system. In Halalkalibacterium halodurans (strain ATCC BAA-125 / DSM 18197 / FERM 7344 / JCM 9153 / C-125) (Bacillus halodurans), this protein is Phosphate import ATP-binding protein PstB.